A 567-amino-acid chain; its full sequence is MRIEDLIAAARGELEADLLLEGGKLVNVFSGEIHRADISIYGGFVAGFDCPSARRVISVEDHLIAPGSIDAHVHIESSMLMPSEYARAVVPRGTLTVIADPHEIANVLGVDGISYLLRCAEGIPMRFLVTAPSCVPATHLETSGAALGVSEIASLLDDHRVVGLGEMMNYPGVIHRDKPVLAKLKVAASKNKTICGHAPGLGGRDLHAYAAALIEDDHECTRAEEAMEQLRAGICIMIREGSAARNLDELVKIIREYNTPNIMLCTDDLDPRDIVHRHIDHMIRRIIEAGTDPVAAIQMATINPARHFGLRRTGAVAPGYRADIIVMDHDFNVRRVIFEGEEVARDGRLTASFESKRLPVQTSMNVRLPITRESFRIPATGRIVRVIGVAPNQILTETIAARPEVRNGEVISDTRNDILKVAVVERHRATGNVGLGLVSGFGLKRGAIASSVSHDSHNIIVVGEDEESMVRAVESLISMGGGWVSVDGTTIASLPLPIAGLLSERRVEDVVEEAENVIAASHSLGSELEDSFMTLSFLALPVIPELRITDRGLVDVREFGHVPLFME.

Belongs to the metallo-dependent hydrolases superfamily. Adenine deaminase family. Mn(2+) is required as a cofactor.

The catalysed reaction is adenine + H2O + H(+) = hypoxanthine + NH4(+). The chain is Adenine deaminase from Methanothrix thermoacetophila (strain DSM 6194 / JCM 14653 / NBRC 101360 / PT) (Methanosaeta thermophila).